We begin with the raw amino-acid sequence, 228 residues long: SPbeta prophage-derived uncharacterized protein YomL (228 aa).

Positions 1–28 (MRKKRVITCVMAASLTLGSLLPAGYATA) are cleaved as a signal peptide.

The polypeptide is SPbeta prophage-derived uncharacterized protein YomL (yomL) (Bacillus subtilis (strain 168)).